Here is a 384-residue protein sequence, read N- to C-terminus: SAGA complex subunit Spt3 (384 aa).

The protein belongs to the SPT3 family. In terms of assembly, component of the Spt-Ada-Gcn5 acetyltransferase (SAGA) complex consisting of wda/Taf5L, Saf6, Taf9, Taf10b, Taf12, Ada1, Spt3, Spt7, Spt20, Sf3b3, Sf3b5, Nipped-A/Tra1, a histone acetyltransferase (HAT) module made up of Gcn5, Ada2b (Isoform B), Ada3 and Sgf29, and a deubiquitinase (DUB) module made up of not/nonstop, Sgf11 and e(y)2 tethered to SAGA by Atxn7. Taf5 and Taf10, which has partially redundant properties with Taf10b, may also be part of this complex.

The protein localises to the nucleus. The protein resides in the chromosome. Its function is as follows. Component of the transcription regulatory complex SAGA, a multiprotein complex that activates transcription by remodeling chromatin and mediating histone acetylation and deubiquitination. The SAGA complex predominantly acetylates histone H3. Required for oogenesis; involved in transcriptional activation. The sequence is that of SAGA complex subunit Spt3 from Drosophila melanogaster (Fruit fly).